A 241-amino-acid chain; its full sequence is Uridylate kinase (241 aa).

Residue 15–18 (KMSG) coordinates ATP. The involved in allosteric activation by GTP stretch occupies residues 23 to 28 (GAEGFG). Position 57 (glycine 57) interacts with UMP. ATP-binding residues include glycine 58 and arginine 62. UMP contacts are provided by residues aspartate 77 and 138–145 (TGNPLFTT). ATP is bound by residues threonine 165, phenylalanine 171, and aspartate 174.

The protein belongs to the UMP kinase family. Homohexamer.

It is found in the cytoplasm. It catalyses the reaction UMP + ATP = UDP + ADP. It participates in pyrimidine metabolism; CTP biosynthesis via de novo pathway; UDP from UMP (UMPK route): step 1/1. Its activity is regulated as follows. Allosterically activated by GTP. Inhibited by UTP. Functionally, catalyzes the reversible phosphorylation of UMP to UDP. The sequence is that of Uridylate kinase from Blochmanniella pennsylvanica (strain BPEN).